A 102-amino-acid polypeptide reads, in one-letter code: uncharacterized protein (102 aa).

3 helical membrane passes run 14 to 34, 35 to 55, and 76 to 96; these read IKNW…VISA, VAFT…LILI, and ILSI…HCYI.

The protein localises to the cell membrane. This is an uncharacterized protein from Methanocaldococcus jannaschii (strain ATCC 43067 / DSM 2661 / JAL-1 / JCM 10045 / NBRC 100440) (Methanococcus jannaschii).